Reading from the N-terminus, the 1801-residue chain is U3 small nucleolar RNA-associated protein 10 (1801 aa).

One copy of the HEAT 1 repeat lies at 582 to 619; the sequence is IDFQALVPFVLVALGDVSERIRREAAAVLAALGALYKK. Transmembrane regions (helical) follow at residues 945-965 and 1001-1021; these read IQSG…AIVN and ALLL…HSVM. 4 HEAT repeats span residues 1045 to 1082, 1252 to 1289, 1296 to 1334, and 1757 to 1794; these read QTID…AFEH, LSLI…QNPE, NRML…KYGK, and ALLP…VLGE.

This sequence belongs to the HEATR1/UTP10 family. As to quaternary structure, component of the ribosomal small subunit (SSU) processome.

It localises to the nucleus. The protein resides in the nucleolus. The protein localises to the membrane. Functionally, involved in nucleolar processing of pre-18S ribosomal RNA. Involved in ribosome biosynthesis. The sequence is that of U3 small nucleolar RNA-associated protein 10 from Aspergillus terreus (strain NIH 2624 / FGSC A1156).